We begin with the raw amino-acid sequence, 147 residues long: Large ribosomal subunit protein bL9 (147 aa).

This sequence belongs to the bacterial ribosomal protein bL9 family.

Its function is as follows. Binds to the 23S rRNA. This chain is Large ribosomal subunit protein bL9, found in Sulfurovum sp. (strain NBC37-1).